The chain runs to 191 residues: dCTP deaminase (191 aa).

DCTP is bound by residues 112–117 (KSTYAR), 136–138 (TLE), Gln157, Tyr173, and Gln183. The Proton donor/acceptor role is filled by Glu138.

This sequence belongs to the dCTP deaminase family. In terms of assembly, homotrimer.

The enzyme catalyses dCTP + H2O + H(+) = dUTP + NH4(+). The protein operates within pyrimidine metabolism; dUMP biosynthesis; dUMP from dCTP (dUTP route): step 1/2. Catalyzes the deamination of dCTP to dUTP. This is dCTP deaminase from Psychrobacter sp. (strain PRwf-1).